A 348-amino-acid polypeptide reads, in one-letter code: GTPase Obg (348 aa).

Residues 1–160 (MHFLDQAKIF…MWVWLRLKLL (160 aa)) form the Obg domain. The disordered stretch occupies residues 120–145 (RGGDGGRGNASYKTSTNRAPRQHGPG). The OBG-type G domain occupies 161 to 328 (ADAGLVGLPN…VLDKLLEAIG (168 aa)). Residues 167 to 174 (GLPNAGKS), 192 to 196 (FTTLR), 213 to 216 (DIPG), 280 to 283 (NKID), and 309 to 311 (SGA) contribute to the GTP site. Mg(2+)-binding residues include serine 174 and threonine 194. The interval 326–348 (AIGQPEPGPDADEEEKGGDWSPI) is disordered.

Belongs to the TRAFAC class OBG-HflX-like GTPase superfamily. OBG GTPase family. Monomer. It depends on Mg(2+) as a cofactor.

It is found in the cytoplasm. In terms of biological role, an essential GTPase which binds GTP, GDP and possibly (p)ppGpp with moderate affinity, with high nucleotide exchange rates and a fairly low GTP hydrolysis rate. Plays a role in control of the cell cycle, stress response, ribosome biogenesis and in those bacteria that undergo differentiation, in morphogenesis control. The sequence is that of GTPase Obg from Sphingopyxis alaskensis (strain DSM 13593 / LMG 18877 / RB2256) (Sphingomonas alaskensis).